Reading from the N-terminus, the 404-residue chain is 6-deoxyerythronolide B hydroxylase (404 aa).

Cysteine 351 contacts heme.

This sequence belongs to the cytochrome P450 family. The cofactor is heme.

It is found in the cytoplasm. It carries out the reaction 6-deoxyerythronolide B + 2 reduced [2Fe-2S]-[ferredoxin] + O2 + 2 H(+) = erythronolide B + 2 oxidized [2Fe-2S]-[ferredoxin] + H2O. The protein operates within antibiotic biosynthesis; erythromycin biosynthesis. Catalyzes the conversion of 6-deoxyerythronolide B (6-DEB) to erythronolide B (EB) by the insertion of an oxygen at the 6S position of 6-DEB. Requires the participation of a ferredoxin and a ferredoxin reductase for the transfer of electrons from NADPH to the monooxygenase. This Saccharopolyspora erythraea (strain ATCC 11635 / DSM 40517 / JCM 4748 / NBRC 13426 / NCIMB 8594 / NRRL 2338) protein is 6-deoxyerythronolide B hydroxylase.